A 436-amino-acid chain; its full sequence is uncharacterized protein (436 aa).

This is an uncharacterized protein from Diadromus pulchellus (Parasitic wasp).